A 672-amino-acid chain; its full sequence is MVKTALEEFAFLIPLLPALAFAITFFFGRKMPSGGAIVPILAIAASFVISFAITLGLLANPEEVISQSYSWFAVLNIGILIDPLAAVMLSMVSFVSLLIHIYAVSYMSHDAGKARYFAETALFTAAMLSLVLSDNILQLFVSWELVGLCSYLLIGFWFEKPSAAAAAKKAFLTTRIGDVMFLTGIIVLTSDLLKVSGGFQDGVYLLRFDEIFSYIPELAALQINILGFEISHLTIITLLFFGGAVGKSGQFPLHVWLPDAMEGPTTVSALIHAATMVTAGVYLVARTFPMFIAAPDSLMVVAYFGGFTALFAGTMGIVMNDLKRVLAFSTISQLGYMMLGLGLGTAIGLEAVGISLFHLINHAFFKALLFLCAGSVIHAVGTQDMRELGGVGKVMPITAATMTIAALALAGFGIPGTSIGTSGFMSKDPIIEAAYLFGEHSSNWIPYVFSILAALLTSIYIFRLIFMTFTGKPRSNYHGHESPAIMTIPLSILAIFALAFGALTRTGFMEFLEETFTNSFVNLDIGALAGIGENELVAAAGHEPLAVLWPPVIVALAGFAIAFVIYYLRAFSLGPLASMKNPIYRLLYNRYYQHQIYTEFFSIGIVYGIIAFLTQVVDVIIDSVVEGIGIVTVFVGEELRKIQTGVVQTYATALIAGVSLLIILVKLIMEVL.

Helical transmembrane passes span E8–G28, I37–L57, I79–I99, I136–F156, V179–F199, I225–V245, T265–A285, L298–V318, M337–F357, I360–V380, V394–I414, Y447–M467, P483–L503, L545–I565, F601–I621, and T652–L672.

It belongs to the complex I subunit 5 family. The FPO complex is composed of at least 13 different subunits. FpoA, FpoH, FpoJ, FpoK, FpoL, FpoM and FpoN proteins constitute the membrane sector of the complex.

It localises to the cell membrane. It catalyses the reaction methanophenazine + reduced coenzyme F420-(gamma-L-Glu)(n) = dihydromethanophenazine + oxidized coenzyme F420-(gamma-L-Glu)(n) + H(+). In terms of biological role, component of the F(420)H(2) dehydrogenase (FPO complex) which is part of the energy-conserving F(420)H(2):heterodisulfide oxidoreductase system. The membrane-bound electron transfer system of the complex plays an important role in the metabolism of methylotrophic methanogens when the organisms grow on methanol or methylamines. Catalyzes the oxidation of methanophenazine to dihydromethanophenazine. It shuttles electrons from F(420)H(2), via FAD and iron-sulfur (Fe-S) centers, to methanophenazine (an electron carrier in the membrane). It couples the redox reaction to proton translocation (for every two electrons transferred, two hydrogen ions are translocated across the cytoplasmic membrane), and thus conserves the redox energy in a proton gradient. It also catalyzes the oxidation of F(420)H(2) with quinones such as 2,3-dimethyl-1,4-naphthoquinone, 2-methyl-1,4-naphthoquinone and tetramethyl-p-benzoquinone. The sequence is that of F(420)H(2) dehydrogenase subunit L (fpoL) from Methanosarcina mazei (strain ATCC BAA-159 / DSM 3647 / Goe1 / Go1 / JCM 11833 / OCM 88) (Methanosarcina frisia).